The primary structure comprises 161 residues: Cyclin-dependent protein kinase inhibitor SMR12 (161 aa).

Acidic residues predominate over residues 84–93 (EEEEVVEEEN). The segment at 84-106 (EEEEVVEEENDGFKTPTRPENRI) is disordered.

Probable cyclin-dependent protein kinase (CDK) inhibitor that functions as a repressor of mitosis in the endoreduplication cell cycle. This chain is Cyclin-dependent protein kinase inhibitor SMR12, found in Arabidopsis thaliana (Mouse-ear cress).